We begin with the raw amino-acid sequence, 1365 residues long: Serine-aspartate repeat-containing protein D (1365 aa).

Residues 1-35 (MLNRENKTAITRKGMVSNRLNKFSIRKYTVGTASI) form the signal peptide. The short motif at 23–34 (FSIRKYTVGTAS) is the YSIRK-G/S signaling motif element. Residues 36-568 (LVGTTLIFGL…NNQSGGAGQE (533 aa)) form a ligand binding A region region. Positions 54–185 (ESTNKELNEA…NKKVDAKTES (132 aa)) are disordered. Polar residues-rich tracts occupy residues 62-71 (EATTSASDNQ) and 94-109 (EMVS…NGNK). A compositionally biased stretch (basic and acidic residues) spans 130–145 (KSDEQASPKSTNEDLN). Polar residues-rich tracts occupy residues 146–155 (TKQTISNQEA) and 163–173 (NKSVVNAQPTN). Residues 174 to 183 (EENKKVDAKT) are compositionally biased toward basic and acidic residues. CNA-B domains are found at residues 569-680 (VYKI…IYKP), 681-791 (KYNL…YKTP), 792-901 (KYNL…FYKP), 902-1012 (TYNL…YKTP), and 1013-1123 (KYSL…EEDT). Disordered regions lie at residues 857 to 884 (ETPS…STTG), 972 to 991 (YTPT…NGLT), and 1078 to 1341 (EKPA…SNNA). 2 stretches are compositionally biased toward polar residues: residues 860-869 (SGYTPTQVGS) and 972-981 (YTPTSVTSGN). Composition is skewed to acidic residues over residues 1091-1101 (TEDDKDADGGE) and 1118-1304 (YFEE…DSDS). The short motif at 1328-1332 (LPETG) is the LPXTG sorting signal element. The residue at position 1331 (Thr-1331) is a Pentaglycyl murein peptidoglycan amidated threonine. Residues 1332–1365 (GNENSGSNNATLFGGLFAALGSLLLFGRRKKQNK) constitute a propeptide, removed by sortase.

It belongs to the serine-aspartate repeat-containing protein (SDr) family. Interacts with host DSG1; this interaction increases S.aureus adherence to keratinocytes.

It is found in the secreted. It localises to the cell wall. Cell surface-associated calcium-binding protein which plays an important role in adhesion and pathogenesis. Mediates interactions with components of the extracellular matrix such as host DSG1 to promote bacterial adhesion to host cells. Contributes to the resistance to killing by innate immune components such as neutrophils present in blood and thus attenuates bacterial clearance. In Staphylococcus aureus (strain MSSA476), this protein is Serine-aspartate repeat-containing protein D (sdrD).